The primary structure comprises 445 residues: Phosphoglucosamine mutase (445 aa).

The Phosphoserine intermediate role is filled by Ser102. Mg(2+) contacts are provided by Ser102, Asp241, Asp243, and Asp245. Ser102 is modified (phosphoserine).

This sequence belongs to the phosphohexose mutase family. Mg(2+) is required as a cofactor. Post-translationally, activated by phosphorylation.

The enzyme catalyses alpha-D-glucosamine 1-phosphate = D-glucosamine 6-phosphate. In terms of biological role, catalyzes the conversion of glucosamine-6-phosphate to glucosamine-1-phosphate. The polypeptide is Phosphoglucosamine mutase (Citrobacter koseri (strain ATCC BAA-895 / CDC 4225-83 / SGSC4696)).